The chain runs to 115 residues: Large ribosomal subunit protein bL20 (115 aa).

This sequence belongs to the bacterial ribosomal protein bL20 family.

In terms of biological role, binds directly to 23S ribosomal RNA and is necessary for the in vitro assembly process of the 50S ribosomal subunit. It is not involved in the protein synthesizing functions of that subunit. The sequence is that of Large ribosomal subunit protein bL20 (rplT) from Borreliella burgdorferi (strain ATCC 35210 / DSM 4680 / CIP 102532 / B31) (Borrelia burgdorferi).